Consider the following 177-residue polypeptide: Alkyl hydroperoxide reductase AhpD (177 aa).

C131 functions as the Proton donor in the catalytic mechanism. Cysteines 131 and 134 form a disulfide. The active-site Cysteine sulfenic acid (-SOH) intermediate is C134.

The protein belongs to the AhpD family.

It catalyses the reaction N(6)-[(R)-dihydrolipoyl]-L-lysyl-[lipoyl-carrier protein] + a hydroperoxide = N(6)-[(R)-lipoyl]-L-lysyl-[lipoyl-carrier protein] + an alcohol + H2O. Functionally, antioxidant protein with alkyl hydroperoxidase activity. Required for the reduction of the AhpC active site cysteine residues and for the regeneration of the AhpC enzyme activity. The polypeptide is Alkyl hydroperoxide reductase AhpD (Solibacter usitatus (strain Ellin6076)).